Consider the following 840-residue polypeptide: E3 ubiquitin-protein ligase SH3RF1 (840 aa).

The segment at 12–53 (CPVCLERLDASAKVLPCQHTFCKRCLLGIVGSRNELRCPECR) adopts an RING-type zinc-finger fold. The interval 105 to 129 (VTCSPKDGPSSQGGPQPRAQAWSPP) is disordered. 2 SH3 domains span residues 134 to 193 (PQLP…IIKP) and 196 to 259 (QPPP…FNSA). Disordered regions lie at residues 267–324 (DQPP…RHSM), 394–442 (TLNP…PRPS), 516–545 (GPAS…VAGG), 578–633 (QARS…AASG), 652–723 (AASL…LGAE), and 744–773 (MAPG…SLGP). Low complexity predominate over residues 273 to 282 (GVAAGEGALA). The segment covering 283–292 (TTPSSTTTKQ) has biased composition (polar residues). The interval 292–362 (QPDGKKNTKK…APSQVHISTT (71 aa)) is interaction with RAC1. Phosphoserine is present on Ser-304. Low complexity-rich tracts occupy residues 307–320 (SLSM…AAQQ) and 405–424 (QAAT…GPRP). The interval 434 to 537 (HPRPQPRPSV…PSTGGPAQKP (104 aa)) is interaction with AKT2. The region spanning 439 to 500 (PRPSVYVAIY…PGNYVAPVTR (62 aa)) is the SH3 3 domain. The span at 616-625 (SPQPPAPLGP) shows a compositional bias: pro residues. A compositionally biased stretch (basic and acidic residues) spans 681–692 (RPDKDGKKEKKG). Phosphoserine is present on Ser-709. The region spanning 781–840 (AVCERHRVVVSYPPQSEAELELKEGDIVFVHKKREDGWFKGTLQRNGKTGLFPGSFVENI) is the SH3 4 domain.

This sequence belongs to the SH3RF family. In terms of assembly, interacts with RAC1; in a GTP-dependent manner. Interacts with MAP3K10/MLK2 and MAP3K11/MLK3. Interacts with MAPK8IP; this interaction leads to the PJAC complex (POSH-JIP or SH3RF1/MAPK8IP apoptotic complex) with a 1:1 ratio. Interacts with SIAH1. Interacts with HERP1. Probably part of a signaling complex that may contain SH3RF1, MAPK8IP, DLK1, MAP2K4/MKK4, MAP2K7/MKK7, MAPK8/JNK1, MAPK9/JNK2, AKT1 and AKT2. Found in a complex with RAC2, MAP3K7/TAK1, MAP2K7/MKK7, MAPK8IP1/JIP1, MAPK8/JNK1 and MAPK9/JNK2. Found in a complex with RAC1, MAP3K11/MLK3, MAP2K7/MKK7, MAPK8IP1/JIP1 and MAPK8/JNK1. Interacts with SH3RF2. In terms of processing, phosphorylated at Ser-304 by AKT1 and AKT2. When phosphorylated, it has reduced ability to bind Rac. Autoubiquitinated. Ubiquitinated by SH3RF2, leading to proteasome-mediated degradation.

It localises to the cytoplasm. The protein resides in the perinuclear region. It is found in the cell projection. Its subcellular location is the lamellipodium. The protein localises to the golgi apparatus. It localises to the trans-Golgi network. The catalysed reaction is S-ubiquitinyl-[E2 ubiquitin-conjugating enzyme]-L-cysteine + [acceptor protein]-L-lysine = [E2 ubiquitin-conjugating enzyme]-L-cysteine + N(6)-ubiquitinyl-[acceptor protein]-L-lysine.. It functions in the pathway protein modification; protein ubiquitination. Functionally, has E3 ubiquitin-protein ligase activity. In the absence of an external substrate, it can catalyze self-ubiquitination. Stimulates ubiquitination of potassium channel KCNJ1, enhancing it's dynamin-dependent and clathrin-independent endocytosis. Acts as a scaffold protein that coordinates with MAPK8IP1/JIP1 in organizing different components of the JNK pathway, including RAC1 or RAC2, MAP3K11/MLK3 or MAP3K7/TAK1, MAP2K7/MKK7, MAPK8/JNK1 and/or MAPK9/JNK2 into a functional multiprotein complex to ensure the effective activation of the JNK signaling pathway. Regulates the differentiation of CD4(+) and CD8(+) T-cells and promotes T-helper 1 (Th1) cell differentiation. Regulates the activation of MAPK8/JNK1 and MAPK9/JNK2 in CD4(+) T-cells and the activation of MAPK8/JNK1 in CD8(+) T-cells. Plays a crucial role in the migration of neocortical neurons in the developing brain. Controls proper cortical neuronal migration and the formation of proximal cytoplasmic dilation in the leading process (PCDLP) in migratory neocortical neurons by regulating the proper localization of activated RAC1 and F-actin assembly. The sequence is that of E3 ubiquitin-protein ligase SH3RF1 (SH3RF1) from Bos taurus (Bovine).